A 583-amino-acid chain; its full sequence is Proline--tRNA ligase (583 aa).

The protein belongs to the class-II aminoacyl-tRNA synthetase family. ProS type 1 subfamily. In terms of assembly, homodimer.

The protein localises to the cytoplasm. It carries out the reaction tRNA(Pro) + L-proline + ATP = L-prolyl-tRNA(Pro) + AMP + diphosphate. Functionally, catalyzes the attachment of proline to tRNA(Pro) in a two-step reaction: proline is first activated by ATP to form Pro-AMP and then transferred to the acceptor end of tRNA(Pro). As ProRS can inadvertently accommodate and process non-cognate amino acids such as alanine and cysteine, to avoid such errors it has two additional distinct editing activities against alanine. One activity is designated as 'pretransfer' editing and involves the tRNA(Pro)-independent hydrolysis of activated Ala-AMP. The other activity is designated 'posttransfer' editing and involves deacylation of mischarged Ala-tRNA(Pro). The misacylated Cys-tRNA(Pro) is not edited by ProRS. In Aromatoleum aromaticum (strain DSM 19018 / LMG 30748 / EbN1) (Azoarcus sp. (strain EbN1)), this protein is Proline--tRNA ligase.